A 143-amino-acid polypeptide reads, in one-letter code: Small ribosomal subunit protein eS12 (143 aa).

The protein belongs to the eukaryotic ribosomal protein eS12 family. As to quaternary structure, component of the small ribosomal subunit. Mature ribosomes consist of a small (40S) and a large (60S) subunit. The 40S subunit contains about 32 different proteins and 1 molecule of RNA (18S). The 60S subunit contains 45 different proteins and 3 molecules of RNA (25S, 5.8S and 5S).

The protein resides in the cytoplasm. Functionally, component of the ribosome, a large ribonucleoprotein complex responsible for the synthesis of proteins in the cell. The small ribosomal subunit (SSU) binds messenger RNAs (mRNAs) and translates the encoded message by selecting cognate aminoacyl-transfer RNA (tRNA) molecules. The large subunit (LSU) contains the ribosomal catalytic site termed the peptidyl transferase center (PTC), which catalyzes the formation of peptide bonds, thereby polymerizing the amino acids delivered by tRNAs into a polypeptide chain. The nascent polypeptides leave the ribosome through a tunnel in the LSU and interact with protein factors that function in enzymatic processing, targeting, and the membrane insertion of nascent chains at the exit of the ribosomal tunnel. The protein is Small ribosomal subunit protein eS12 (RPS12) of Candida albicans (strain SC5314 / ATCC MYA-2876) (Yeast).